Consider the following 506-residue polypeptide: Glutamate--tRNA ligase (506 aa).

A 'HIGH' region motif is present at residues 23–33 (PSPTGTPHVGL). Residues 267 to 271 (KLSKR) carry the 'KMSKS' region motif. Lys-270 is a binding site for ATP.

This sequence belongs to the class-I aminoacyl-tRNA synthetase family. Glutamate--tRNA ligase type 1 subfamily. Monomer.

The protein resides in the cytoplasm. The enzyme catalyses tRNA(Glu) + L-glutamate + ATP = L-glutamyl-tRNA(Glu) + AMP + diphosphate. In terms of biological role, catalyzes the attachment of glutamate to tRNA(Glu) in a two-step reaction: glutamate is first activated by ATP to form Glu-AMP and then transferred to the acceptor end of tRNA(Glu). The protein is Glutamate--tRNA ligase of Clavibacter michiganensis subsp. michiganensis (strain NCPPB 382).